A 232-amino-acid polypeptide reads, in one-letter code: Recombination protein RecR (232 aa).

Residues 92-107 form a C4-type zinc finger; that stretch reads CQVCFHLSAEPVCDIC. In terms of domain architecture, Toprim spans 115 to 209; it reads SVICVVSDPR…KVTRIAFGLP (95 aa).

This sequence belongs to the RecR family.

Its function is as follows. May play a role in DNA repair. It seems to be involved in an RecBC-independent recombinational process of DNA repair. It may act with RecF and RecO. The chain is Recombination protein RecR from Synechocystis sp. (strain ATCC 27184 / PCC 6803 / Kazusa).